Consider the following 103-residue polypeptide: N(4)-acetylcytidine amidohydrolase (103 aa).

Positions 6-101 (ITFFQRFQDD…QTQFYVIEFK (96 aa)) constitute an ASCH domain. The active-site Proton acceptor is lysine 21. Threonine 24 acts as the Nucleophile in catalysis. Residue glutamate 74 is the Proton donor of the active site.

It belongs to the N(4)-acetylcytidine amidohydrolase family.

The catalysed reaction is N(4)-acetylcytidine + H2O = cytidine + acetate + H(+). It carries out the reaction N(4)-acetyl-2'-deoxycytidine + H2O = 2'-deoxycytidine + acetate + H(+). It catalyses the reaction N(4)-acetylcytosine + H2O = cytosine + acetate + H(+). Its function is as follows. Catalyzes the hydrolysis of N(4)-acetylcytidine (ac4C). This is N(4)-acetylcytidine amidohydrolase (yqfB) from Escherichia coli (strain SE11).